Consider the following 182-residue polypeptide: Transcription termination/antitermination protein NusG (182 aa).

This sequence belongs to the NusG family.

Its function is as follows. Participates in transcription elongation, termination and antitermination. The polypeptide is Transcription termination/antitermination protein NusG (Chlamydia pneumoniae (Chlamydophila pneumoniae)).